The chain runs to 549 residues: Chaperonin GroEL (549 aa).

ATP contacts are provided by residues 30–33 (TLGP), K51, 87–91 (DGTTT), G415, and D497.

The protein belongs to the chaperonin (HSP60) family. In terms of assembly, forms a cylinder of 14 subunits composed of two heptameric rings stacked back-to-back. Interacts with the co-chaperonin GroES.

The protein resides in the cytoplasm. The enzyme catalyses ATP + H2O + a folded polypeptide = ADP + phosphate + an unfolded polypeptide.. In terms of biological role, together with its co-chaperonin GroES, plays an essential role in assisting protein folding. The GroEL-GroES system forms a nano-cage that allows encapsulation of the non-native substrate proteins and provides a physical environment optimized to promote and accelerate protein folding. This Pectobacterium atrosepticum (strain SCRI 1043 / ATCC BAA-672) (Erwinia carotovora subsp. atroseptica) protein is Chaperonin GroEL.